The primary structure comprises 309 residues: MTNSLYKKHIISIPELSRAELELIVKTAGQLKAEPNPELIKNKVVASCFFEPSTRTRLSFETAIQRIGGDVIGFDDGGNTSLAKKGETLSDSVQVISNYVDAFVMRHPQEGAARLASEFSNGVPVINAGDGANQHPTQTLLDLFTISETQDRLDNLNVAFVGDLKYGRTVHSLTQALAKFNNIRFFFVAPDALAMPDYILEDLDEAGISYSLHTDMETVIPELDILYMTRVQKERFDESEYAHIKSAYILTAALLEGARENLKVLHPLPRVDEITTDVDKTPHAYYFQQAGNGVYAREALLALVLNESL.

The carbamoyl phosphate site is built by Arg55 and Thr56. An L-aspartate-binding site is contributed by Lys85. Positions 106, 135, and 138 each coordinate carbamoyl phosphate. Residues Arg168 and Arg230 each coordinate L-aspartate. Residues Leu268 and Pro269 each contribute to the carbamoyl phosphate site.

Belongs to the aspartate/ornithine carbamoyltransferase superfamily. ATCase family. As to quaternary structure, heterododecamer (2C3:3R2) of six catalytic PyrB chains organized as two trimers (C3), and six regulatory PyrI chains organized as three dimers (R2).

The catalysed reaction is carbamoyl phosphate + L-aspartate = N-carbamoyl-L-aspartate + phosphate + H(+). The protein operates within pyrimidine metabolism; UMP biosynthesis via de novo pathway; (S)-dihydroorotate from bicarbonate: step 2/3. In terms of biological role, catalyzes the condensation of carbamoyl phosphate and aspartate to form carbamoyl aspartate and inorganic phosphate, the committed step in the de novo pyrimidine nucleotide biosynthesis pathway. The sequence is that of Aspartate carbamoyltransferase catalytic subunit from Vibrio vulnificus (strain YJ016).